Reading from the N-terminus, the 210-residue chain is Outer-membrane lipoprotein carrier protein (210 aa).

A signal peptide spans 1 to 26; sequence MHMIRRAAGALAVFAVAALAAAPAWA.

Belongs to the LolA family. Monomer.

It is found in the periplasm. In terms of biological role, participates in the translocation of lipoproteins from the inner membrane to the outer membrane. Only forms a complex with a lipoprotein if the residue after the N-terminal Cys is not an aspartate (The Asp acts as a targeting signal to indicate that the lipoprotein should stay in the inner membrane). This chain is Outer-membrane lipoprotein carrier protein, found in Bordetella pertussis (strain Tohama I / ATCC BAA-589 / NCTC 13251).